A 222-amino-acid chain; its full sequence is UPF0758 protein YE0063 (222 aa).

The 123-residue stretch at 100–222 (VLQNPEITQK…CVSFAERGWL (123 aa)) folds into the MPN domain. Zn(2+) is bound by residues histidine 171, histidine 173, and aspartate 184. The JAMM motif signature appears at 171-184 (HNHPSGKAEPSQAD).

It belongs to the UPF0758 family. YicR subfamily.

This chain is UPF0758 protein YE0063, found in Yersinia enterocolitica serotype O:8 / biotype 1B (strain NCTC 13174 / 8081).